Here is an 805-residue protein sequence, read N- to C-terminus: MLNYNHNQIEKKWQDYWDENKTFKTNDNLGQKKFYALDMFPYPSGAGLHVGHPEGYTATDIISRYKRMQGYNVLHPMGWDAFGLPAEQYALDTGNDPREFTKKNIQTFKRQIKELGFSYDWDREVNTTDPEYYKWTQWIFIQLYNKGLAYVDEVAVNWCPALGTVLSNEEVIDGVSERGGHPVYRKPMKQWVLKITEYADQLLADLDDLDWPESLKDMQRNWIGRSEGAKVSFDVDNTEGKVEVFTTRPDTIYGASFLVLSPEHALVNSITTDEYKEKVKAYQTEASKKSDLERTDLAKDKSGVFTGAYAINPLSGEKVQIWIADYVLSTYGTGAIMAVPAHDDRDYEFAKKFDLPIIEVIEGGNVEEAAYTGEGKHINSGELDGLENEAAITKAIQLLEQKGAGEKKVNYKLRDWLFSRQRYWGEPIPVIHWEDGTMTTVPEEELPLLLPETDEIKPSGTGESPLANIDSFVNVVDEKTGMKGRRETNTMPQWAGSCWYYLRYIDPKNENMLADPEKLKHWLPVDLYIGGVEHAVLHLLYARFWHKVLYDLGIVPTKEPFQKLFNQGMILGEGNEKMSKSKGNVINPDDIVQSHGADTLRLYEMFMGPLDAAIAWSEKGLDGSRRFLDRVWRLMVNEDGTLSSKIVTTNNKSLDKVYNQTVKKVTEDFETLGFNTAISQLMVFINECYKVDEVYKPYIEGFVKMLAPIAPHIGEELWSKLGHEESITYQPWPTYDEALLVDDEVEIVVQVNGKLRAKIKIAKDTSKEEMQEIALSNDNVKASIEGKDIMKVIAVPQKLVNIVAK.

A 'HIGH' region motif is present at residues 41-52; it reads PYPSGAGLHVGH. A 'KMSKS' region motif is present at residues 577–581; the sequence is KMSKS. Residue K580 coordinates ATP.

This sequence belongs to the class-I aminoacyl-tRNA synthetase family.

The protein resides in the cytoplasm. The catalysed reaction is tRNA(Leu) + L-leucine + ATP = L-leucyl-tRNA(Leu) + AMP + diphosphate. This is Leucine--tRNA ligase from Staphylococcus aureus (strain JH1).